The chain runs to 160 residues: Transcriptional repressor NrdR (160 aa).

Residues 3 to 34 fold into a zinc finger; that stretch reads CPACNYNGTKVLDSRPVQDFGSIRRRRECESC. The region spanning 49–139 is the ATP-cone domain; it reads LIIVKKDGTR…VYKQFKDINV (91 aa).

It belongs to the NrdR family. Zn(2+) serves as cofactor.

In terms of biological role, negatively regulates transcription of bacterial ribonucleotide reductase nrd genes and operons by binding to NrdR-boxes. In Exiguobacterium sibiricum (strain DSM 17290 / CCUG 55495 / CIP 109462 / JCM 13490 / 255-15), this protein is Transcriptional repressor NrdR.